The chain runs to 1168 residues: Protein VARIATION IN COMPOUND TRIGGERED ROOT growth response (1168 aa).

The region spanning 10-171 (WVYDVFLSFS…EIANDVLAKL (162 aa)) is the TIR domain. Residue glutamate 85 is part of the active site. In terms of domain architecture, NB-ARC spans 187-452 (EDHIANMSVL…ACLFNHVKVR (266 aa)). LRR repeat units follow at residues 539–562 (TSKV…LFLD), 606–629 (LRNL…AMSF), 631–653 (CLKE…SKAT), 676–699 (LNKL…GFNL), 701–720 (SLDY…PEFA), 721–744 (TNIS…YFKN), 795–820 (LNNL…NLES), 839–865 (STNI…FFNL), 873–896 (CREL…SFSN), and 1065–1089 (NVPL…DWRS).

It belongs to the disease resistance NB-LRR family. As to quaternary structure, part of a nuclear protein complex made of VICTR, PAD4 and EDS1. Interacts (via TIR domain) with PAD4 and EDS1.

The protein resides in the cytoplasm. The protein localises to the nucleus. The catalysed reaction is NAD(+) + H2O = ADP-D-ribose + nicotinamide + H(+). Its function is as follows. Disease resistance protein of the TIR-NB-LRR-type. Part of the RPS6 locus that contains a cluster of several paralogous disease resistance (R) genes. Resistance proteins guard the plant against pathogens that contain an appropriate avirulence protein via an indirect interaction with this avirulence protein. That triggers a defense system including the hypersensitive response, which restricts the pathogen growth. Required for [5-(3,4-dichlorophenyl)furan-2-yl]-piperidine-1-ylmethanethione-(DFPM-) induced root growth arrest due to reduced number of meristem cells in the division zone of the primary root and inhibition of abscisic acid- (ABA-) induced stomatal closing. The sequence is that of Protein VARIATION IN COMPOUND TRIGGERED ROOT growth response (VICTR) from Arabidopsis thaliana (Mouse-ear cress).